Reading from the N-terminus, the 503-residue chain is Probable cytosol aminopeptidase (503 aa).

Mn(2+) contacts are provided by Lys-270 and Asp-275. Lys-282 is a catalytic residue. Residues Asp-293, Asp-352, and Glu-354 each coordinate Mn(2+). Arg-356 is an active-site residue.

This sequence belongs to the peptidase M17 family. Requires Mn(2+) as cofactor.

The protein localises to the cytoplasm. The enzyme catalyses Release of an N-terminal amino acid, Xaa-|-Yaa-, in which Xaa is preferably Leu, but may be other amino acids including Pro although not Arg or Lys, and Yaa may be Pro. Amino acid amides and methyl esters are also readily hydrolyzed, but rates on arylamides are exceedingly low.. The catalysed reaction is Release of an N-terminal amino acid, preferentially leucine, but not glutamic or aspartic acids.. Its function is as follows. Presumably involved in the processing and regular turnover of intracellular proteins. Catalyzes the removal of unsubstituted N-terminal amino acids from various peptides. In Sodalis glossinidius (strain morsitans), this protein is Probable cytosol aminopeptidase.